A 407-amino-acid chain; its full sequence is Tyrosine--tRNA ligase (407 aa).

An L-tyrosine-binding site is contributed by Tyr35. The 'HIGH' region signature appears at 40–49 (PTADSLHVGH). Residues Tyr168 and Gln172 each coordinate L-tyrosine. Residues 228–232 (KMGKT) carry the 'KMSKS' region motif. Lys231 provides a ligand contact to ATP. In terms of domain architecture, S4 RNA-binding spans 341 to 405 (NSLVDLLAKC…RGKKNFNRIV (65 aa)).

Belongs to the class-I aminoacyl-tRNA synthetase family. TyrS type 1 subfamily. Homodimer.

It is found in the cytoplasm. It catalyses the reaction tRNA(Tyr) + L-tyrosine + ATP = L-tyrosyl-tRNA(Tyr) + AMP + diphosphate + H(+). Functionally, catalyzes the attachment of tyrosine to tRNA(Tyr) in a two-step reaction: tyrosine is first activated by ATP to form Tyr-AMP and then transferred to the acceptor end of tRNA(Tyr). The chain is Tyrosine--tRNA ligase from Clostridium botulinum (strain Loch Maree / Type A3).